A 505-amino-acid chain; its full sequence is GDP-Man:Man(3)GlcNAc(2)-PP-Dol alpha-1,2-mannosyltransferase (505 aa).

Residues 1-4 (MSTM) are Lumenal-facing. Residues 5-25 (LWVVVAAVLLFVLPVVRVPML) traverse the membrane as a helical segment. Residues 26–130 (DLTRRNIIRW…KWVDGSTWKH (105 aa)) lie on the Cytoplasmic side of the membrane. Positions 131 to 151 (LTLVGQAMGSMLLTIEALLRF) form an intramembrane region, helical. Over 152 to 374 (VPDIWLDTMG…FGINAMWNEH (223 aa)) the chain is Cytoplasmic. Residues 375 to 395 (FGIAVVEYAAAGLISLVHASA) constitute an intramembrane region (helical). At 396 to 505 (GPLLDIIVPW…EHKTSRLGSN (110 aa)) the chain is on the cytoplasmic side.

Belongs to the glycosyltransferase group 1 family.

It is found in the endoplasmic reticulum membrane. It carries out the reaction an alpha-D-Man-(1-&gt;3)-[alpha-D-Man-(1-&gt;6)]-beta-D-Man-(1-&gt;4)-beta-D-GlcNAc-(1-&gt;4)-alpha-D-GlcNAc-diphospho-di-trans,poly-cis-dolichol + 2 GDP-alpha-D-mannose = an alpha-D-Man-(1-&gt;2)-alpha-D-Man-(1-&gt;2)-alpha-D-Man-(1-&gt;3)-[alpha-D-Man-(1-&gt;6)]-beta-D-Man-(1-&gt;4)-beta-D-GlcNAc-(1-&gt;4)-alpha-D-GlcNAc-diphospho-di-trans,poly-cis-dolichol + 2 GDP + 2 H(+). It participates in protein modification; protein glycosylation. Functionally, GDP-Man:Man(3)GlcNAc(2)-PP-Dol alpha-1,2-mannosyltransferase that operates in the biosynthetic pathway of dolichol-linked oligosaccharides, the glycan precursors employed in protein asparagine (N)-glycosylation. The assembly of dolichol-linked oligosaccharides begins on the cytosolic side of the endoplasmic reticulum membrane and finishes in its lumen. The sequential addition of sugars to dolichol pyrophosphate produces dolichol-linked oligosaccharides containing fourteen sugars, including two GlcNAcs, nine mannoses and three glucoses. Once assembled, the oligosaccharide is transferred from the lipid to nascent proteins by oligosaccharyltransferases. Catalyzes, on the cytoplasmic face of the endoplasmic reticulum, the addition of the fourth and fifth mannose residues to the dolichol-linked oligosaccharide chain, to produce Man(5)GlcNAc(2)-PP-dolichol core oligosaccharide. The polypeptide is GDP-Man:Man(3)GlcNAc(2)-PP-Dol alpha-1,2-mannosyltransferase (ALG11) (Candida glabrata (strain ATCC 2001 / BCRC 20586 / JCM 3761 / NBRC 0622 / NRRL Y-65 / CBS 138) (Yeast)).